A 507-amino-acid polypeptide reads, in one-letter code: ATP synthase subunit alpha, chloroplastic (507 aa).

170 to 177 serves as a coordination point for ATP; it reads GDRQTGKT.

This sequence belongs to the ATPase alpha/beta chains family. As to quaternary structure, F-type ATPases have 2 components, CF(1) - the catalytic core - and CF(0) - the membrane proton channel. CF(1) has five subunits: alpha(3), beta(3), gamma(1), delta(1), epsilon(1). CF(0) has four main subunits: a, b, b' and c.

Its subcellular location is the plastid. The protein localises to the chloroplast thylakoid membrane. The enzyme catalyses ATP + H2O + 4 H(+)(in) = ADP + phosphate + 5 H(+)(out). In terms of biological role, produces ATP from ADP in the presence of a proton gradient across the membrane. The alpha chain is a regulatory subunit. This Phalaenopsis aphrodite subsp. formosana (Moth orchid) protein is ATP synthase subunit alpha, chloroplastic.